We begin with the raw amino-acid sequence, 385 residues long: 6-hydroxynicotinate 3-monooxygenase (385 aa).

The N-terminal stretch at 1–20 (MSQSPRIAVVGAGLGGAAAA) is a signal peptide. FAD-binding positions include Gly-15, 34-35 (EQ), His-47, Arg-108, and Leu-130. Catalysis depends on His-47, which acts as the Proton acceptor. The Proton acceptor role is filled by Tyr-215. Residues Asp-294 and 307 to 308 (AA) each bind FAD.

Belongs to the 6-hydroxynicotinate 3-monooxygenase family. Monomer. FAD serves as cofactor.

It catalyses the reaction 6-hydroxynicotinate + NADH + O2 + 2 H(+) = 2,5-dihydroxypyridine + CO2 + NAD(+) + H2O. Its activity is regulated as follows. Inhibited competitively by nicotinic acid with a Ki of 0.49 mM. Inhibited by thiol-specific compounds p-chloromercuribenzoate, DTNB, Ag(2)SO(4), HgCl(2), CuCl(2) and N-ethylmaleimide. No inhibition by o-phenanthroline, 8-hydroxyquinoline, EDTA, disodium 4,5-dihydroxy-m-benzenedisulfonate, fluoride, azide, KCl, LiCl, NaCl, BaCl(2), MnCl(2), MgCl(2), PBCl, ZnCl(2), CoCl(2), SnCl(2), FeSO(4), FeCl(3), NiCl(2), CdCl(2), AlCl(3), iodoacetic acid, hydro-xylamine, phenylhydrazine, semicarbazide, cysteamine, alpha,alpha-dipyridyl and urea. Flavin-dependent monooxygenase (FMO) that catalyzes the decarboxylative hydroxylation of 6-hydroxynicotinic acid (6-HNA) to 2,5-dihydroxypyridine (2,5-DHP) with concomitant oxidation of NADH, a step in the aerobic nicotinate degradation pathway. Uses NADH in preference to NADPH as an electron donor. The polypeptide is 6-hydroxynicotinate 3-monooxygenase (nicC) (Pseudomonas fluorescens).